Consider the following 155-residue polypeptide: Ribonuclease 8 (155 aa).

The signal sequence occupies residues 1-28 (MAPARAGCCPLLLLLLLGLWVAEIPVSA). Disulfide bonds link cysteine 65–cysteine 119, cysteine 83–cysteine 134, and cysteine 90–cysteine 97. Substrate is bound by residues 66–70 (KDLNT) and lysine 91. Histidine 150 functions as the Proton donor in the catalytic mechanism.

This sequence belongs to the pancreatic ribonuclease family.

Its subcellular location is the secreted. Its function is as follows. Has a low ribonuclease activity. The chain is Ribonuclease 8 (RNASE8) from Saguinus oedipus (Cotton-top tamarin).